We begin with the raw amino-acid sequence, 414 residues long: 2-acylphloroglucinol 4-prenyltransferase (414 aa).

The transit peptide at 1–86 directs the protein to the chloroplast; it reads MELSSVSSFS…LKPLSIFSCK (86 aa). 8 helical membrane-spanning segments follow: residues 153–173, 201–221, 229–249, 256–276, 281–301, 336–356, 359–379, and 394–414; these read FSWPLIFRALLGMLAILGSCF, ISVESAWLLTLSPAIIGFILI, LLTSLYCLAILSGTIYSVPPF, ITAFLCILMIHAGLNFSVYYA, LGLAFVWSPSFSFITAFITFM, LLGTGLLLLNYVAAISTAIIW, AFKSNIMLLSHAILAFSLFFQ, and KSFYEFIWILFSAEYVVYLFI.

Belongs to the UbiA prenyltransferase family. Component an active demethylxanthohumol (DMX) biosynthetic metabolon in glandular trichomes (lupulin glands) that encompasses a chalcone synthase (CHS) and a membrane-bound prenyltransferase. Interacts with PT2, forming a functional metabolon. Interacts with CHIL2; this interaction promotes catalytic activity. Mg(2+) serves as cofactor. In terms of tissue distribution, expressed in trichomes.

The protein resides in the plastid. The protein localises to the chloroplast membrane. The enzyme catalyses 2',4,4',6'-tetrahydroxychalcone + dimethylallyl diphosphate = desmethylxanthohumol + diphosphate. It carries out the reaction a 2-acylphloroglucinol + dimethylallyl diphosphate = a 2-acyl-4-prenylphloroglucinol + diphosphate. It functions in the pathway secondary metabolite biosynthesis. Stimulated by CHIL2 but inhibited by CHIL1. Functionally, involved in the biosynthesis of prenylated phenolics natural products which contribute to the bitter taste of beer and display broad biological activities. Catalyzes the first prenylation step in the beta-bitter acid pathway. Uses dimethylallyl diphosphate (DMAPP) as the prenyl donor. The protein is 2-acylphloroglucinol 4-prenyltransferase of Humulus lupulus (European hop).